Here is a 202-residue protein sequence, read N- to C-terminus: Peroxynitrite isomerase (202 aa).

The GXWXGXG motif lies at 21–27 (GEWEGRG). Residue histidine 193 participates in heme b binding.

It belongs to the nitrobindin family. As to quaternary structure, homodimer. Heme b serves as cofactor.

The enzyme catalyses peroxynitrite = nitrate. Its pathway is nitrogen metabolism. Its function is as follows. Heme-binding protein able to scavenge peroxynitrite and to protect free L-tyrosine against peroxynitrite-mediated nitration, by acting as a peroxynitrite isomerase that converts peroxynitrite to nitrate. Therefore, this protein likely plays a role in peroxynitrite sensing and in the detoxification of reactive nitrogen and oxygen species (RNS and ROS, respectively). Is able to bind nitric oxide (NO) in vitro, but may act as a sensor of peroxynitrite levels in vivo. The polypeptide is Peroxynitrite isomerase (Pseudarthrobacter chlorophenolicus (strain ATCC 700700 / DSM 12829 / CIP 107037 / JCM 12360 / KCTC 9906 / NCIMB 13794 / A6) (Arthrobacter chlorophenolicus)).